Reading from the N-terminus, the 213-residue chain is Response regulator GacA (213 aa).

Residues 3-119 enclose the Response regulatory domain; that stretch reads RVLVVDDHDL…EMVQAIRLVF (117 aa). D54 is subject to 4-aspartylphosphate. One can recognise an HTH luxR-type domain in the interval 142-207; it reads SDSPFDALSE…ELTLLAVRHG (66 aa). Residues 166 to 185 constitute a DNA-binding region (H-T-H motif); the sequence is VQIISDKLCLSPKTVNTYRY.

Phosphorylated by GacS.

Functionally, member of the two-component regulatory system GacA/GacS which controls the expression of secondary metabolites and extracellular products. Acts (probably primarily) by activating expression of CsrA1 and CsrA2 antagonist small RNAs (sRNA) RsmX, RsmY and RsmZ which bind to and prevent translation repression by CsrA1 and CsrA2. Involved in the regulation of secondary metabolism and in the synthesis of the antifungal factors cyanide, 2,4-diacetylphloroglucinol and pyoluteorin. Involved in synthesis of the autoinducing signal (unrelated to N-acylhomoserine lactones, induces the Gac/Csr cascade). Exercises positive post-transcriptional control over the hcnABC and aprA genes; acts upstream of CsrA2 (rsmA). Controls expression of csrA1 (rsmE) and csrA2. In Pseudomonas protegens (strain DSM 19095 / LMG 27888 / CFBP 6595 / CHA0), this protein is Response regulator GacA.